Reading from the N-terminus, the 504-residue chain is MNIKPEEITSIIRQQIENFNTNIETIDSGTIIQIGDGIARVYGLEDCMEGELIEFPNDVYGMALNLEQDNVGCVLLGSEEGIKEGNVVKRTKKVVEVPVGEALVGRVVNSLGMPIDGKGPVLTTETRDVEVPAPGVIDRQSVKEPLQTGIKAIDSMIPIGKGQRELIIGDRQTGKTAIAMDTILNQKGKDVICIYVAIGQKQSTVAHIVNDLTKMGAMDYTIVVSSTASDSAPLQYLAPYAGCSMGEYFMHKGKDVLIVYDDLSKHAVAYRTMSLLLRRPPGREAYPGDVFYLHSRLLERSARLSEKLGGGSLTALPIVETLAGDVTAYIPTNVISITDGQIFLESELFNAGQRPAVNAGISVSRVGGNAQIKAMKQVAGTLRLELAQYRELAAFSQFGSDLDKESVKRLEKGKRLVEILKQPQYGPMPVEKEIIILYAAVSNHLIDIPVNKIKEFEKELFNYIDTHYRDIGKDILEHKQLTDELKSKLDKAINDFKNVFLSEI.

Residue 169-176 coordinates ATP; that stretch reads GDRQTGKT.

This sequence belongs to the ATPase alpha/beta chains family. F-type ATPases have 2 components, CF(1) - the catalytic core - and CF(0) - the membrane proton channel. CF(1) has five subunits: alpha(3), beta(3), gamma(1), delta(1), epsilon(1). CF(0) has three main subunits: a(1), b(2) and c(9-12). The alpha and beta chains form an alternating ring which encloses part of the gamma chain. CF(1) is attached to CF(0) by a central stalk formed by the gamma and epsilon chains, while a peripheral stalk is formed by the delta and b chains.

Its subcellular location is the cell membrane. The enzyme catalyses ATP + H2O + 4 H(+)(in) = ADP + phosphate + 5 H(+)(out). In terms of biological role, produces ATP from ADP in the presence of a proton gradient across the membrane. The alpha chain is a regulatory subunit. The protein is ATP synthase subunit alpha of Clostridium botulinum (strain Loch Maree / Type A3).